We begin with the raw amino-acid sequence, 557 residues long: Protein PNS1 (557 aa).

The tract at residues 1–58 is disordered; it reads MSTEKQYQPQQPPPAYTGQGPDNGNAYGYPESYGKTETHSGDSCSGDTSMNPQQQGQQ. Over 1–99 the chain is Cytoplasmic; it reads MSTEKQYQPQ…DNNKPKFNDW (99 aa). Residues 41–58 show a composition bias toward polar residues; that stretch reads GDSCSGDTSMNPQQQGQQ. The helical transmembrane segment at 100 to 120 threads the bilayer; the sequence is PFIIVFLLTLCGFIVVASLTL. The Extracellular segment spans residues 121 to 147; the sequence is RAWSQTYSSTGSGIYHDFDTGTLNTNS. The chain crosses the membrane as a helical span at residues 148-168; the sequence is VILLVFSVVIAIFFAFIGIVL. Topologically, residues 169 to 174 are cytoplasmic; the sequence is CRAYPK. The chain crosses the membrane as a helical span at residues 175–195; that stretch reads FFIYAGMIVNILAALGTAIMY. At 196-200 the chain is on the extracellular side; the sequence is MSLKY. Residues 201–221 traverse the membrane as a helical segment; that stretch reads WSAGIVFLIFTFMTAWCYWGM. Topologically, residues 222–246 are cytoplasmic; the sequence is RSRIPLTVAILRVIVLAMKNCPQSL. Residues 247–267 form a helical membrane-spanning segment; it reads FVSFFGTIVASAFAMLFSTVV. Residues 268-292 lie on the Extracellular side of the membrane; it reads VATYMKYDPSNTNSGCNVSGGDCSH. N-linked (GlcNAc...) asparagine glycosylation is present at Asn284. The helical transmembrane segment at 293 to 313 threads the bilayer; that stretch reads AKLIGVLVVVFFCGYYISEVI. Over 314–350 the chain is Cytoplasmic; it reads RNVMHCTVSGVFGSWYYRYKSDQGMPKWPAMGAFKRA. The helical transmembrane segment at 351–371 threads the bilayer; the sequence is MTYSFGSICFGSLIVSIIETF. Residues 372–393 are Extracellular-facing; the sequence is RQLLQLGKQAAIASTDNANWIR. The chain crosses the membrane as a helical span at residues 394-414; that stretch reads IIFWLIDMLVGFIQWIAQYFN. The Cytoplasmic portion of the chain corresponds to 415-454; it reads HYAYCIIALYGKPYLKAAKQTWYMFREKGIDALINDNLVN. A helical membrane pass occupies residues 455–475; sequence VALGFYSLFASYMSCLFAFLY. The Extracellular portion of the chain corresponds to 476–488; sequence LRFTKPGYNSDGD. Residues 489-509 form a helical membrane-spanning segment; the sequence is FNAPLMAFAFVIALQLTNIAN. The Cytoplasmic segment spans residues 510 to 557; it reads ETIRSGCATFFTALGHDPEVFQAQYPDRFDEIFRSYPQVLNKLTHQDV.

Belongs to the CTL (choline transporter-like) family.

It is found in the cell membrane. In terms of biological role, probably involved in transport through the plasma membrane. This chain is Protein PNS1 (PNS1), found in Candida glabrata (strain ATCC 2001 / BCRC 20586 / JCM 3761 / NBRC 0622 / NRRL Y-65 / CBS 138) (Yeast).